Reading from the N-terminus, the 306-residue chain is tRNA pseudouridine synthase B (306 aa).

Aspartate 39 (nucleophile) is an active-site residue.

This sequence belongs to the pseudouridine synthase TruB family. Type 1 subfamily.

It catalyses the reaction uridine(55) in tRNA = pseudouridine(55) in tRNA. Its function is as follows. Responsible for synthesis of pseudouridine from uracil-55 in the psi GC loop of transfer RNAs. This Arthrobacter sp. (strain FB24) protein is tRNA pseudouridine synthase B.